Reading from the N-terminus, the 688-residue chain is MAKKKGENYDSDGGDDQDYDEEPNFDDPEGFVDDVSDEELLGDFLKQKPCESDGVENVIVVDNIPVVGPARFHKLQGVLEKLFKTAGTIVNIHYPKDDEENTRGYAFIEFKNPEMAEEAVKAFNNYRLDKSHTLLVNLFSDFQKYSDIPKEWSPPEPQPYKMQNDLYNFITEPDAQDQFCVIAESSPGAVQVQFWQNTQPEPVELLTRDRFTETYVKWSPLGTYIVTFHKQGVVIWGGSNFTKINKFPHSGTQYVDFSPCEQYLVTYGPNGQKIIIWDIRTGTEKRSFISDGTSNMSMFRWSHDDKYVARMGDNAIHVYETSTFYLLDKKSIKVQGIRNFSWSPTDNIIAYWMSEDLEAPARVTLLEIPRKNEIRNKNLFNVADCKIHWQKSGDYLCVKVDRYSKSKKDKKDADVKFLGMFYNFEIFHMREKDIPVDSVEVKETILAFAWEPVGSKFAIIHGDPASANVSFYEAKKGQEPTMLKKLEKKICSHLFWSPRGQFIVLANLQAGSFEFVDTNDFTIMKSGDHFRASEVEWDPTGRYVVTGTSGKVKEDHGYHIWSFQGKILKRVNLKNFILFLWRPRPPTLLSDEKQKEIRKNLKKYYAQFESKDRIRMTRASKELLEKRAKLREQFVEYRTKRVSEWEEQKYRRMQLRNNIDTDTLDADPDNVEEEIVEILVREDTTLLE.

The tract at residues 1 to 32 (MAKKKGENYDSDGGDDQDYDEEPNFDDPEGFV) is disordered. Residues 9–32 (YDSDGGDDQDYDEEPNFDDPEGFV) are compositionally biased toward acidic residues. The 85-residue stretch at 57-141 (NVIVVDNIPV…HTLLVNLFSD (85 aa)) folds into the RRM domain. WD repeat units follow at residues 208-246 (RDRF…KINK), 247-287 (FPHS…EKRS), 291-329 (DGTS…LLDK), 332-367 (IKVQ…TLLE), 440-482 (EVKE…EPTM), and 527-572 (GDHF…KRVN). A coiled-coil region spans residues 613–642 (RIRMTRASKELLEKRAKLREQFVEYRTKRV).

Belongs to the eIF-3 subunit B family. Component of the eukaryotic translation initiation factor 3 (eIF-3) complex.

It is found in the cytoplasm. RNA-binding component of the eukaryotic translation initiation factor 3 (eIF-3) complex, which is involved in protein synthesis of a specialized repertoire of mRNAs and, together with other initiation factors, stimulates binding of mRNA and methionyl-tRNAi to the 40S ribosome. The eIF-3 complex specifically targets and initiates translation of a subset of mRNAs involved in cell proliferation. The sequence is that of Eukaryotic translation initiation factor 3 subunit B from Aedes aegypti (Yellowfever mosquito).